We begin with the raw amino-acid sequence, 354 residues long: Lipoyl synthase, mitochondrial (354 aa).

Cys91, Cys96, Cys102, Cys122, Cys126, Cys129, and Ser337 together coordinate [4Fe-4S] cluster. The 220-residue stretch at 107–326 (DDSLATATIM…AEYSKKLGFL (220 aa)) folds into the Radical SAM core domain.

It belongs to the radical SAM superfamily. Lipoyl synthase family. [4Fe-4S] cluster is required as a cofactor.

The protein localises to the mitochondrion. The enzyme catalyses [[Fe-S] cluster scaffold protein carrying a second [4Fe-4S](2+) cluster] + N(6)-octanoyl-L-lysyl-[protein] + 2 oxidized [2Fe-2S]-[ferredoxin] + 2 S-adenosyl-L-methionine + 4 H(+) = [[Fe-S] cluster scaffold protein] + N(6)-[(R)-dihydrolipoyl]-L-lysyl-[protein] + 4 Fe(3+) + 2 hydrogen sulfide + 2 5'-deoxyadenosine + 2 L-methionine + 2 reduced [2Fe-2S]-[ferredoxin]. The protein operates within protein modification; protein lipoylation via endogenous pathway; protein N(6)-(lipoyl)lysine from octanoyl-[acyl-carrier-protein]: step 2/2. Its function is as follows. Catalyzes the radical-mediated insertion of two sulfur atoms into the C-6 and C-8 positions of the octanoyl moiety bound to the lipoyl domains of lipoate-dependent enzymes, thereby converting the octanoylated domains into lipoylated derivatives. This chain is Lipoyl synthase, mitochondrial, found in Caenorhabditis elegans.